Reading from the N-terminus, the 152-residue chain is SsrA-binding protein (152 aa).

The interval 122-152 (KGKKNHDKRETEAARDWQRDKARLMKGDRGD) is disordered. The span at 128 to 152 (DKRETEAARDWQRDKARLMKGDRGD) shows a compositional bias: basic and acidic residues.

This sequence belongs to the SmpB family.

The protein resides in the cytoplasm. Its function is as follows. Required for rescue of stalled ribosomes mediated by trans-translation. Binds to transfer-messenger RNA (tmRNA), required for stable association of tmRNA with ribosomes. tmRNA and SmpB together mimic tRNA shape, replacing the anticodon stem-loop with SmpB. tmRNA is encoded by the ssrA gene; the 2 termini fold to resemble tRNA(Ala) and it encodes a 'tag peptide', a short internal open reading frame. During trans-translation Ala-aminoacylated tmRNA acts like a tRNA, entering the A-site of stalled ribosomes, displacing the stalled mRNA. The ribosome then switches to translate the ORF on the tmRNA; the nascent peptide is terminated with the 'tag peptide' encoded by the tmRNA and targeted for degradation. The ribosome is freed to recommence translation, which seems to be the essential function of trans-translation. This chain is SsrA-binding protein, found in Caulobacter sp. (strain K31).